Consider the following 240-residue polypeptide: Zinc finger CCCH domain-containing protein 52 (240 aa).

2 disordered regions span residues 1 to 37 (MDARKRGRPEAAASHNSNGGFKRSKQEMESISTGLGS) and 81 to 106 (SQVSRNMQGSGGPGGRFSGRGDPGSG). The segment at 36–64 (GSKSKPCTKFFSTSGCPFGDNCHFLHYVP) adopts a C3H1-type 1 zinc-finger fold. Residues 89 to 104 (GSGGPGGRFSGRGDPG) are compositionally biased toward gly residues. The KH domain occupies 113-177 (ASTSKISVDA…EQINVASGMV (65 aa)). The C3H1-type 2 zinc-finger motif lies at 205-232 (NYKTKICDRYSKGNCTYGDRCHFAHGES).

This is Zinc finger CCCH domain-containing protein 52 from Arabidopsis thaliana (Mouse-ear cress).